A 302-amino-acid chain; its full sequence is Zinc finger protein-like 1 homolog (302 aa).

Residues 1-43 form a B box-type; degenerate zinc finger; that stretch reads MGLCKCPKRLVTNQFCFEHRVNVCEHCMVQSHPKCIVQSYLQW. The RING-type; atypical zinc-finger motif lies at 53–101; sequence CNLCGTSLEQGECVRLVCYHVFHWDCLNARQAALPANTAPRGHQCPGCS. Residues 168-233 are disordered; that stretch reads IHSGGERERG…RDDNKYQRRT (66 aa). Over residues 198-208 the composition is skewed to polar residues; sequence PPSSGDFNASS. Ser217 is subject to Phosphoserine. Residues 258 to 278 traverse the membrane as a helical segment; sequence WFLVLSGILAFVMFIYLLAWM.

This sequence belongs to the ZFPL1 family.

The protein resides in the membrane. The chain is Zinc finger protein-like 1 homolog from Drosophila pseudoobscura pseudoobscura (Fruit fly).